Consider the following 570-residue polypeptide: Fibropellin-3 (570 aa).

An N-terminal signal peptide occupies residues 1 to 17 (MKVSLLAVLLLSIVAAT). An EGF-like 1 domain is found at 18 to 55 (YGQGECGSNPCENGSVCRDGEGTYICECQMGYDGQNCD). Cystine bridges form between cysteine 23–cysteine 34, cysteine 28–cysteine 43, cysteine 45–cysteine 54, and cysteine 62–cysteine 88. Residue asparagine 30 is glycosylated (N-linked (GlcNAc...) asparagine). The region spanning 62–175 (CGYNIFESTG…RKGFRITFSS (114 aa)) is the CUB domain. Asparagine 136 carries N-linked (GlcNAc...) asparagine glycosylation. The EGF-like 2; calcium-binding domain maps to 176 to 212 (DGDDCTPNPCLNGATCVDQVNDYQCICAPGFTGDNCE). Cystine bridges form between cysteine 180/cysteine 191, cysteine 185/cysteine 200, cysteine 202/cysteine 211, cysteine 218/cysteine 229, cysteine 223/cysteine 238, cysteine 240/cysteine 249, cysteine 256/cysteine 267, cysteine 261/cysteine 276, cysteine 278/cysteine 287, cysteine 294/cysteine 305, cysteine 299/cysteine 314, cysteine 316/cysteine 325, cysteine 332/cysteine 343, cysteine 337/cysteine 352, cysteine 354/cysteine 363, cysteine 370/cysteine 381, cysteine 375/cysteine 390, cysteine 392/cysteine 401, cysteine 408/cysteine 419, cysteine 413/cysteine 428, cysteine 430/cysteine 439, and cysteine 445/cysteine 521. Positions 214–250 (DIDECASAPCRNGGACVDQVNGYTCNCIPGFNGVNCE) constitute an EGF-like 3; calcium-binding domain. Positions 252-288 (NINECASIPCLNGGICVDGINQFACTCLPGYTGILCE) constitute an EGF-like 4; calcium-binding domain. The region spanning 290–326 (DINECASSPCQNGGSCTDAVNRYTCDCRAGFTGSNCE) is the EGF-like 5; calcium-binding domain. One can recognise an EGF-like 6; calcium-binding domain in the interval 328–364 (NINECASSPCLNGGSCLDGVDGYVCQCLPNYTGTHCE). An N-linked (GlcNAc...) asparagine glycan is attached at asparagine 357. One can recognise an EGF-like 7 domain in the interval 366 to 402 (SLDACASLPCQNGGVCTNVGGDYVCECLPGYTGINCE). In terms of domain architecture, EGF-like 8; calcium-binding spans 404–440 (DINECASLPCQNGGECINGIAMYICQCRQGYAGVNCE). In terms of domain architecture, Avidin-like spans 443–562 (GFCDLEGVWF…GQDKWTRYEQ (120 aa)).

Homotetramer.

It is found in the secreted. The protein resides in the extracellular space. Forms the apical lamina, a component of the extracellular matrix. This is Fibropellin-3 (EGF3) from Strongylocentrotus purpuratus (Purple sea urchin).